The sequence spans 345 residues: AA9 family lytic polysaccharide monooxygenase D (345 aa).

The first 21 residues, 1–21, serve as a signal peptide directing secretion; that stretch reads MPSFTSKTLLAALAGAAAVNA. Residues His22 and His107 each contribute to the Cu(2+) site. A disulfide bridge connects residues Cys77 and Cys200. Asn160 carries an N-linked (GlcNAc...) asparagine glycan. His186 and Gln195 together coordinate O2. Tyr197 serves as a coordination point for Cu(2+). The interval 315 to 345 is disordered; the sequence is VQTSTRPISTRPQPTRCPGLGRRHLRKVARA. Over residues 318 to 327 the composition is skewed to polar residues; the sequence is STRPISTRPQ. The span at 335-345 shows a compositional bias: basic residues; that stretch reads GRRHLRKVARA.

Belongs to the polysaccharide monooxygenase AA9 family. Cu(2+) serves as cofactor.

It localises to the secreted. The enzyme catalyses [(1-&gt;4)-beta-D-glucosyl]n+m + reduced acceptor + O2 = 4-dehydro-beta-D-glucosyl-[(1-&gt;4)-beta-D-glucosyl]n-1 + [(1-&gt;4)-beta-D-glucosyl]m + acceptor + H2O.. Lytic polysaccharide monooxygenase (LPMO) that depolymerizes crystalline and amorphous polysaccharides via the oxidation of scissile alpha- or beta-(1-4)-glycosidic bonds, yielding C1 or C4 oxidation products. Catalysis by LPMOs requires the reduction of the active-site copper from Cu(II) to Cu(I) by a reducing agent and H(2)O(2) or O(2) as a cosubstrate. In Podospora anserina (strain S / ATCC MYA-4624 / DSM 980 / FGSC 10383) (Pleurage anserina), this protein is AA9 family lytic polysaccharide monooxygenase D.